A 664-amino-acid polypeptide reads, in one-letter code: SPARC-like protein 1 (664 aa).

The signal sequence occupies residues 1–16 (MKTGLFFLCLLGTAAA). The O-glycosylated at one additional site stretch occupies residues 25 to 34 (SDHSKPTAET). Residues 28–360 (SKPTAETVAP…DGPRHSASDD (333 aa)) are disordered. Thr-31 and Thr-40 each carry an O-linked (GalNAc...) threonine glycan. Ser-44 is a glycosylation site (O-linked (GalNAc...) serine). The segment covering 62–84 (DDSHHKAEKSSVLKSKEESHEQS) has biased composition (basic and acidic residues). 3 positions are modified to phosphoserine: Ser-76, Ser-84, and Ser-92. Positions 85–94 (AEQGKSSSQE) are enriched in polar residues. Residues 96–105 (GLKDQEDSDG) show a composition bias toward basic and acidic residues. Thr-116 carries an O-linked (GalNAc...) threonine glycan. A compositionally biased stretch (basic and acidic residues) spans 120 to 136 (LDIKEDMSEPQEKKLSE). A compositionally biased stretch (polar residues) spans 146 to 156 (SSFTDSNQQES). An N-linked (GlcNAc...) asparagine glycan is attached at Asn-169. The span at 170 to 180 (YSHHQLNRSSK) shows a compositional bias: basic residues. Ser-171 carries the phosphoserine modification. Asn-176 and Asn-196 each carry an N-linked (GlcNAc...) asparagine glycan. The span at 188–199 (QGNQEQDPNISN) shows a compositional bias: polar residues. Residues 216–235 (DNQERKTELPREHANSKQEE) show a composition bias toward basic and acidic residues. Acidic residues-rich tracts occupy residues 236-248 (DNTQSDDILEESD) and 259-280 (DEFDQGNQEQEDNSNAEMEEEN). Ser-272 is modified (phosphoserine). N-linked (GlcNAc...) asparagine glycosylation occurs at Asn-280. Basic and acidic residues predominate over residues 306–316 (SNHKETEEKTV). O-linked (GalNAc...) threonine glycosylation is present at Thr-331. A compositionally biased stretch (acidic residues) spans 339–349 (DDGDDDGDDGG). Phosphoserine occurs at positions 358 and 365. The segment at 388-426 (EKVHENENIGTTEPGEHQEAKKAENSSNEEETSSEGNMR) is disordered. Thr-398 carries an O-linked (GalNAc...) threonine glycan. Over residues 401 to 411 (PGEHQEAKKAE) the composition is skewed to basic and acidic residues. N-linked (GlcNAc...) asparagine glycosylation occurs at Asn-412. Phosphoserine is present on Ser-420. The Follistatin-like domain occupies 432–454 (SCMSFQCKRGHICKADQQGKPHC). 7 disulfide bridges follow: Cys-433–Cys-444, Cys-438–Cys-454, Cys-456–Cys-490, Cys-462–Cys-483, Cys-472–Cys-509, Cys-515–Cys-626, and Cys-634–Cys-650. Residues 450–511 (GKPHCVCQDP…QLDYFGACKS (62 aa)) form the Kazal-like domain. Asn-476 is a glycosylation site (N-linked (GlcNAc...) asparagine). One can recognise an EF-hand domain in the interval 622–657 (PMEHCITRFFEECDPNKDKHITLKEWGHCFGIKEED). The Ca(2+) site is built by Asp-635, Asn-637, Asp-639, His-641, and Glu-646.

It belongs to the SPARC family. In terms of processing, N- and O-glycosylated. O-glycosylated with a core 1 or possibly core 8 glycan. As to expression, highly expressed in lymph node, brain, heart, lung, skeletal muscle, ovary, small intestine, and colon, with lower levels in placenta, pancreas, testis, spleen, and thymus, and no expression in kidney, liver, and peripheral blood leukocytes.

The protein localises to the secreted. The protein resides in the extracellular space. It localises to the extracellular matrix. The protein is SPARC-like protein 1 (SPARCL1) of Homo sapiens (Human).